Reading from the N-terminus, the 519-residue chain is Protein twist (519 aa).

Disordered regions lie at residues 53-77 (MQQQ…QQQY), 131-156 (NFEQ…VATA), 301-321 (YEAY…SDRD), and 368-389 (FRKP…DEFS). Low complexity-rich tracts occupy residues 54-76 (QQQQ…QQQQ) and 134-146 (QQQQ…QQQQ). Residues 308 to 317 (NSLNGSTYSS) show a composition bias toward polar residues. Residues 368–379 (FRKPRRRLKRKP) show a composition bias toward basic residues. Residues 390–441 (NQRVMANVRERQRTQSLNDAFKALQQIIPTLPSDKLSKIQTLKLATRYIDFL) enclose the bHLH domain.

Efficient DNA binding requires dimerization with another bHLH protein. Homodimer.

Its subcellular location is the nucleus. Its function is as follows. Involved in the establishment and dorsoventral patterning of germ layers in the embryo. This is Protein twist from Drosophila virilis (Fruit fly).